The primary structure comprises 248 residues: UPF0246 protein A1G_03985 (248 aa).

It belongs to the UPF0246 family.

The chain is UPF0246 protein A1G_03985 from Rickettsia rickettsii (strain Sheila Smith).